A 695-amino-acid polypeptide reads, in one-letter code: Follicle-stimulating hormone receptor (695 aa).

The N-terminal stretch at 1–17 (MALLLVSLLAFLSLGSG) is a signal peptide. Intrachain disulfides connect C18-C25 and C23-C32. Residues 18-46 (CHHRICHCSNRVFLCQESKVTEIPSDLPR) form the LRRNT domain. Topologically, residues 18 to 366 (CHHRICHCSN…EDIMGYNILR (349 aa)) are extracellular. 9 LRR repeats span residues 49–72 (IELR…FGDL), 73–97 (EKIE…LPKL), 98–118 (HEIR…AFQN), 119–143 (LPNL…KIHS), 144–169 (LQKV…VGLS), 170–192 (FESV…AFNG), 193–216 (TQLD…VFHG), 217–240 (ASGP…GLEN), and 241–259 (LKKL…PTLE). 2 N-linked (GlcNAc...) asparagine glycosylation sites follow: N191 and N199. 4 disulfide bridges follow: C275–C346, C276–C292, C276–C356, and C292–C338. N-linked (GlcNAc...) asparagine glycans are attached at residues N293 and N318. Residue Y335 is modified to Sulfotyrosine. A helical membrane pass occupies residues 367–387 (VLIWFISILAITGNIIVLVIL). At 388–398 (TTSQYKLTVPR) the chain is on the cytoplasmic side. A helical transmembrane segment spans residues 399-421 (FLMCNLAFADLCIGIYLLLIASV). The Extracellular segment spans residues 422–443 (DIHTKSQYHNYAIDWQTGAGCD). The cysteines at positions 442 and 517 are disulfide-linked. The helical transmembrane segment at 444–465 (AAGFFTVFASELSVYTLTAITL) threads the bilayer. The Cytoplasmic portion of the chain corresponds to 466-485 (ERWHTITHAMQLDCKVQLRH). A helical membrane pass occupies residues 486 to 508 (AASVMVMGWIFAFAAALFPIFGI). Over 509–528 (SSYMKVSICLPMDIDSPLSQ) the chain is Extracellular. A helical transmembrane segment spans residues 529–550 (LYVMSLLVLNVLAFVVICGCYI). Residues 551-573 (HIYLTVRNPNIVSSSSDTRIAKR) are Cytoplasmic-facing. Residues 574 to 597 (MAMLIFTDFLCMAPISFFAISASL) traverse the membrane as a helical segment. The Extracellular segment spans residues 598 to 608 (KVPLITVSKAK). Residues 609 to 630 (ILLVLFHPINSCANPFLYAIFT) form a helical membrane-spanning segment. The Cytoplasmic portion of the chain corresponds to 631–695 (KNFRRDFFIL…LVPLSHLAQN (65 aa)).

The protein belongs to the G-protein coupled receptor 1 family. FSH/LSH/TSH subfamily. As to quaternary structure, homotrimer. Functions as a homotrimer binding the FSH hormone heterodimer composed of CGA and FSHB. Interacts with ARRB2. Interacts with APPL2; interaction is independent of follicle stimulating hormone stimulation. In terms of processing, sulfated. Post-translationally, N-glycosylated; indirectly required for FSH-binding, possibly via a conformational change that allows high affinity binding of hormone. Sertoli cells and ovarian granulosa cells.

It is found in the cell membrane. Its function is as follows. G protein-coupled receptor for follitropin, the follicle-stimulating hormone. Through cAMP production activates the downstream PI3K-AKT and ERK1/ERK2 signaling pathways. The protein is Follicle-stimulating hormone receptor (FSHR) of Homo sapiens (Human).